Reading from the N-terminus, the 564-residue chain is MFS-type efflux transporter ffsH (564 aa).

Basic and acidic residues predominate over residues 1 to 18; that stretch reads MSEAEKKASQDAQHKEPM. The tract at residues 1–37 is disordered; the sequence is MSEAEKKASQDAQHKEPMADSETQLDSDSAPSSQAEK. The span at 21–35 shows a compositional bias: polar residues; that stretch reads SETQLDSDSAPSSQA. Transmembrane regions (helical) follow at residues 43–63, 98–118, 131–151, and 157–177; these read YPLSFWLAFGALCLTGLISAM, YVMILATAIFLLGSGICGGAN, GIGAGGINMLVDLIICDLVPM, and FIGLLFLFVSIGTTSGPIIGG. An N-linked (GlcNAc...) asparagine glycan is attached at Asn182. Transmembrane regions (helical) follow at residues 187–207, 226–246, 254–274, 300–320, 334–354, 362–382, 389–409, 427–447, and 502–522; these read WVFYINLPMGGAALVLLVLFL, VVGNAILVGATFSILYALTYG, AANIVAPFVLGFVGLGIFIAW, FFISFMTMILAFWVVYFYPVY, VHLLPFEVSFPIFAAVGGGLV, PIHMVATSIVTIAIGASSVLT, AWAVLQIFIGMGLGSLISTTL, TWAYMRSLGTIWGVSVPAAIF, and VWLVSIAFGAVTVLSTLFEKE. The disordered stretch occupies residues 540 to 564; the sequence is GDAKGDVERGEGQNDSREGGQNENV. A glycan (N-linked (GlcNAc...) asparagine) is linked at Asn553.

The protein belongs to the major facilitator superfamily.

The protein localises to the cell membrane. MFS-type efflux transporter; part of the gene cluster that mediates the biosynthesis of the cytotoxic leucine-containing cytochalasans, including aspochalasin C, aspochalasin E, TMC-169, flavichalasine F, aspergillin PZ, aspochalasin M and flavichalasine G. FfsH might be involved in the excretion of cytochalasans. The polypeptide is MFS-type efflux transporter ffsH (Aspergillus flavipes).